The following is a 124-amino-acid chain: Glutaredoxin-2 (124 aa).

Cysteine 13 and cysteine 16 are joined by a disulfide.

It belongs to the glutaredoxin family. Homodimer.

The protein resides in the host cytoplasm. Its function is as follows. Glutaredoxin necessary for virion morphogenesis and virus replication. Functions as a thiol-disulfide transfer protein between membrane-associated OPG128 and substrates OPG095 or OPG053. The complete pathway for formation of disulfide bonds in intracellular virion membrane proteins sequentially involves oxidation of OPG072, OPG128 and OPG088. Exhibit thioltransferase and dehydroascorbate reductase activities in vitro. The protein is Glutaredoxin-2 (OPG088) of Homo sapiens (Human).